A 233-amino-acid chain; its full sequence is Purine nucleoside phosphorylase DeoD-type (233 aa).

Residue histidine 4 coordinates a purine D-ribonucleoside. Residues glycine 20, arginine 24, arginine 43, and 87–90 (RVGT) each bind phosphate. Residues 178–180 (EME) and 202–203 (SD) contribute to the a purine D-ribonucleoside site. Aspartate 203 acts as the Proton donor in catalysis.

This sequence belongs to the PNP/UDP phosphorylase family. Homohexamer; trimer of homodimers.

It carries out the reaction a purine D-ribonucleoside + phosphate = a purine nucleobase + alpha-D-ribose 1-phosphate. It catalyses the reaction a purine 2'-deoxy-D-ribonucleoside + phosphate = a purine nucleobase + 2-deoxy-alpha-D-ribose 1-phosphate. Its function is as follows. Catalyzes the reversible phosphorolytic breakdown of the N-glycosidic bond in the beta-(deoxy)ribonucleoside molecules, with the formation of the corresponding free purine bases and pentose-1-phosphate. This chain is Purine nucleoside phosphorylase DeoD-type, found in Listeria monocytogenes serotype 4b (strain CLIP80459).